The primary structure comprises 344 residues: Probable electron transfer flavoprotein subunit alpha, mitochondrial (344 aa).

284-312 (LYIAIGVSGAVQHLAGMKDSKVIVAINND) contributes to the FAD binding site.

The protein belongs to the ETF alpha-subunit/FixB family. As to quaternary structure, heterodimer of an alpha and a beta subunit. FAD serves as cofactor.

It is found in the mitochondrion matrix. Its function is as follows. The electron transfer flavoprotein serves as a specific electron acceptor for several dehydrogenases, including five acyl-CoA dehydrogenases, glutaryl-CoA and sarcosine dehydrogenase. It transfers the electrons to the main mitochondrial respiratory chain via ETF-ubiquinone oxidoreductase (ETF dehydrogenase). This is Probable electron transfer flavoprotein subunit alpha, mitochondrial (AIM45) from Saccharomyces cerevisiae (strain ATCC 204508 / S288c) (Baker's yeast).